A 294-amino-acid polypeptide reads, in one-letter code: 4-hydroxy-tetrahydrodipicolinate synthase (294 aa).

Pyruvate is bound at residue Thr47. The Proton donor/acceptor role is filled by Tyr135. Catalysis depends on Lys163, which acts as the Schiff-base intermediate with substrate. Ile206 serves as a coordination point for pyruvate.

Belongs to the DapA family. Homodimer.

Its subcellular location is the cytoplasm. It carries out the reaction L-aspartate 4-semialdehyde + pyruvate = (2S,4S)-4-hydroxy-2,3,4,5-tetrahydrodipicolinate + H2O + H(+). Its pathway is amino-acid biosynthesis; L-lysine biosynthesis via DAP pathway; (S)-tetrahydrodipicolinate from L-aspartate: step 3/4. Functionally, catalyzes the condensation of (S)-aspartate-beta-semialdehyde [(S)-ASA] and pyruvate to 4-hydroxy-tetrahydrodipicolinate (HTPA). The polypeptide is 4-hydroxy-tetrahydrodipicolinate synthase (Staphylococcus haemolyticus (strain JCSC1435)).